The chain runs to 561 residues: Dihydroxy-acid dehydratase (561 aa).

Cysteine 50 is a [2Fe-2S] cluster binding site. Aspartate 82 is a binding site for Mg(2+). Cysteine 123 is a binding site for [2Fe-2S] cluster. Mg(2+) is bound by residues aspartate 124 and lysine 125. Position 125 is an N6-carboxylysine (lysine 125). Cysteine 195 is a [2Fe-2S] cluster binding site. A Mg(2+)-binding site is contributed by glutamate 447. Serine 473 acts as the Proton acceptor in catalysis.

This sequence belongs to the IlvD/Edd family. As to quaternary structure, homodimer. [2Fe-2S] cluster is required as a cofactor. It depends on Mg(2+) as a cofactor.

It carries out the reaction (2R)-2,3-dihydroxy-3-methylbutanoate = 3-methyl-2-oxobutanoate + H2O. It catalyses the reaction (2R,3R)-2,3-dihydroxy-3-methylpentanoate = (S)-3-methyl-2-oxopentanoate + H2O. It functions in the pathway amino-acid biosynthesis; L-isoleucine biosynthesis; L-isoleucine from 2-oxobutanoate: step 3/4. The protein operates within amino-acid biosynthesis; L-valine biosynthesis; L-valine from pyruvate: step 3/4. Its function is as follows. Functions in the biosynthesis of branched-chain amino acids. Catalyzes the dehydration of (2R,3R)-2,3-dihydroxy-3-methylpentanoate (2,3-dihydroxy-3-methylvalerate) into 2-oxo-3-methylpentanoate (2-oxo-3-methylvalerate) and of (2R)-2,3-dihydroxy-3-methylbutanoate (2,3-dihydroxyisovalerate) into 2-oxo-3-methylbutanoate (2-oxoisovalerate), the penultimate precursor to L-isoleucine and L-valine, respectively. The sequence is that of Dihydroxy-acid dehydratase from Microcystis aeruginosa (strain NIES-843 / IAM M-2473).